The following is a 660-amino-acid chain: Threonine--tRNA ligase (660 aa).

In terms of domain architecture, TGS spans 1–49 (MPINEIRVQKGQRYRDAINDKKVIAVKKGDKFLDLDEIAGEDEAVQPVY). The tract at residues 225 to 554 (DHRKIIAEMD…LLEHFAGKLP (330 aa)) is catalytic. 3 residues coordinate Zn(2+): Cys318, His369, and His531.

This sequence belongs to the class-II aminoacyl-tRNA synthetase family. In terms of assembly, homodimer. Zn(2+) serves as cofactor.

Its subcellular location is the cytoplasm. It carries out the reaction tRNA(Thr) + L-threonine + ATP = L-threonyl-tRNA(Thr) + AMP + diphosphate + H(+). Its function is as follows. Catalyzes the attachment of threonine to tRNA(Thr) in a two-step reaction: L-threonine is first activated by ATP to form Thr-AMP and then transferred to the acceptor end of tRNA(Thr). The protein is Threonine--tRNA ligase of Thermoplasma volcanium (strain ATCC 51530 / DSM 4299 / JCM 9571 / NBRC 15438 / GSS1).